The primary structure comprises 716 residues: Fatty acid oxidation complex subunit alpha (716 aa).

The tract at residues 1 to 189 is enoyl-CoA hydratase/isomerase; that stretch reads MIYQSPTIQV…KVGAVDAVVA (189 aa). Position 296 (Asp-296) interacts with substrate. Positions 311 to 716 are 3-hydroxyacyl-CoA dehydrogenase; the sequence is KEVNNAAVLG…AANNGSYYQA (406 aa). NAD(+)-binding positions include Met-324, Asp-343, 400-402, Lys-407, and Ser-429; that span reads VVE. The active-site For 3-hydroxyacyl-CoA dehydrogenase activity is His-450. An NAD(+)-binding site is contributed by Asn-453. Substrate is bound by residues Asn-500 and Tyr-660.

In the N-terminal section; belongs to the enoyl-CoA hydratase/isomerase family. The protein in the C-terminal section; belongs to the 3-hydroxyacyl-CoA dehydrogenase family. As to quaternary structure, heterotetramer of two alpha chains (FadB) and two beta chains (FadA).

It catalyses the reaction a (3S)-3-hydroxyacyl-CoA + NAD(+) = a 3-oxoacyl-CoA + NADH + H(+). It carries out the reaction a (3S)-3-hydroxyacyl-CoA = a (2E)-enoyl-CoA + H2O. The enzyme catalyses a 4-saturated-(3S)-3-hydroxyacyl-CoA = a (3E)-enoyl-CoA + H2O. The catalysed reaction is (3S)-3-hydroxybutanoyl-CoA = (3R)-3-hydroxybutanoyl-CoA. It catalyses the reaction a (3Z)-enoyl-CoA = a 4-saturated (2E)-enoyl-CoA. It carries out the reaction a (3E)-enoyl-CoA = a 4-saturated (2E)-enoyl-CoA. It functions in the pathway lipid metabolism; fatty acid beta-oxidation. Its function is as follows. Involved in the aerobic and anaerobic degradation of long-chain fatty acids via beta-oxidation cycle. Catalyzes the formation of 3-oxoacyl-CoA from enoyl-CoA via L-3-hydroxyacyl-CoA. It can also use D-3-hydroxyacyl-CoA and cis-3-enoyl-CoA as substrate. In Shewanella baltica (strain OS223), this protein is Fatty acid oxidation complex subunit alpha.